Consider the following 466-residue polypeptide: UDP-N-acetylmuramoylalanine--D-glutamate ligase (466 aa).

139–145 is an ATP binding site; that stretch reads GTAGKGG.

The protein belongs to the MurCDEF family.

Its subcellular location is the cytoplasm. The enzyme catalyses UDP-N-acetyl-alpha-D-muramoyl-L-alanine + D-glutamate + ATP = UDP-N-acetyl-alpha-D-muramoyl-L-alanyl-D-glutamate + ADP + phosphate + H(+). The protein operates within cell wall biogenesis; peptidoglycan biosynthesis. Its function is as follows. Cell wall formation. Catalyzes the addition of glutamate to the nucleotide precursor UDP-N-acetylmuramoyl-L-alanine (UMA). This Deinococcus geothermalis (strain DSM 11300 / CIP 105573 / AG-3a) protein is UDP-N-acetylmuramoylalanine--D-glutamate ligase.